We begin with the raw amino-acid sequence, 164 residues long: uncharacterized protein (164 aa).

2 helical membrane-spanning segments follow: residues 11–31 (FYVN…PSLL) and 51–71 (CQQY…LVLV).

It is found in the membrane. This is an uncharacterized protein from Saccharomyces cerevisiae (strain ATCC 204508 / S288c) (Baker's yeast).